The sequence spans 372 residues: Chaperone protein DnaJ (372 aa).

Residues 3–68 (NLYEILEVNE…EKRKKYDMYG (66 aa)) form the J domain. Residues 130 to 212 (GTKKEISYKK…CKGKGYEIER (83 aa)) form a CR-type zinc finger. Residues Cys143, Cys146, Cys160, Cys163, Cys186, Cys189, Cys200, and Cys203 each contribute to the Zn(2+) site. 4 CXXCXGXG motif repeats span residues 143–150 (CHVCNGDG), 160–167 (CEKCHGTG), 186–193 (CDKCHGEG), and 200–207 (CENCKGKG).

The protein belongs to the DnaJ family. Homodimer. It depends on Zn(2+) as a cofactor.

It is found in the cytoplasm. Its function is as follows. Participates actively in the response to hyperosmotic and heat shock by preventing the aggregation of stress-denatured proteins and by disaggregating proteins, also in an autonomous, DnaK-independent fashion. Unfolded proteins bind initially to DnaJ; upon interaction with the DnaJ-bound protein, DnaK hydrolyzes its bound ATP, resulting in the formation of a stable complex. GrpE releases ADP from DnaK; ATP binding to DnaK triggers the release of the substrate protein, thus completing the reaction cycle. Several rounds of ATP-dependent interactions between DnaJ, DnaK and GrpE are required for fully efficient folding. Also involved, together with DnaK and GrpE, in the DNA replication of plasmids through activation of initiation proteins. In Finegoldia magna (strain ATCC 29328 / DSM 20472 / WAL 2508) (Peptostreptococcus magnus), this protein is Chaperone protein DnaJ.